We begin with the raw amino-acid sequence, 89 residues long: Small ribosomal subunit protein uS15 (89 aa).

The interval 1-24 (MSLDTTEKQQLINSHQTHATDTGS) is disordered. The segment covering 8–24 (KQQLINSHQTHATDTGS) has biased composition (polar residues).

Belongs to the universal ribosomal protein uS15 family. In terms of assembly, part of the 30S ribosomal subunit. Forms a bridge to the 50S subunit in the 70S ribosome, contacting the 23S rRNA.

Functionally, one of the primary rRNA binding proteins, it binds directly to 16S rRNA where it helps nucleate assembly of the platform of the 30S subunit by binding and bridging several RNA helices of the 16S rRNA. Its function is as follows. Forms an intersubunit bridge (bridge B4) with the 23S rRNA of the 50S subunit in the ribosome. The polypeptide is Small ribosomal subunit protein uS15 (Synechococcus sp. (strain CC9311)).